A 1508-amino-acid polypeptide reads, in one-letter code: ABC-type transporter oblD (1508 aa).

Disordered regions lie at residues methionine 1 to asparagine 35 and lysine 54 to glycine 82. Over residues threonine 11–asparagine 24 the composition is skewed to polar residues. N-linked (GlcNAc...) asparagine glycans are attached at residues asparagine 24 and asparagine 35. Polar residues predominate over residues tyrosine 55 to proline 68. N-linked (GlcNAc...) asparagine glycosylation is found at asparagine 83, asparagine 231, and asparagine 314. Positions leucine 136 to aspartate 390 constitute an ABC transporter 1 domain. 5 helical membrane passes run isoleucine 501–phenylalanine 521, leucine 536–tyrosine 556, glycine 610–phenylalanine 630, alanine 643–proline 663, and glycine 752–isoleucine 772. One can recognise an ABC transporter 2 domain in the interval phenylalanine 828–glycine 1070. Glycine 864–threonine 871 is a binding site for ATP. The next 4 membrane-spanning stretches (helical) occupy residues tyrosine 1172–tyrosine 1192, phenylalanine 1206–phenylalanine 1226, leucine 1296–leucine 1316, and alanine 1322–threonine 1342. The N-linked (GlcNAc...) asparagine glycan is linked to asparagine 1390. A helical transmembrane segment spans residues phenylalanine 1443–tryptophan 1463.

Belongs to the ABC transporter superfamily. ABCG family. PDR (TC 3.A.1.205) subfamily.

The protein localises to the cell membrane. ABC-type transporter; part of the gene cluster that mediates the biosynthesis of the sesterterpenes ophiobolins, fungal phytotoxins with potential anti-cancer activities. Acts as a specific transporter involved in ophiobolins secretion. In Cochliobolus heterostrophus (strain C5 / ATCC 48332 / race O) (Southern corn leaf blight fungus), this protein is ABC-type transporter oblD.